Here is a 307-residue protein sequence, read N- to C-terminus: 4-hydroxythreonine-4-phosphate dehydrogenase (307 aa).

Positions 126 and 127 each coordinate substrate. Histidine 156, histidine 195, and histidine 251 together coordinate a divalent metal cation. Positions 259, 268, and 277 each coordinate substrate.

This sequence belongs to the PdxA family. Homodimer. The cofactor is Zn(2+). Requires Mg(2+) as cofactor. Co(2+) serves as cofactor.

The protein resides in the cytoplasm. It carries out the reaction 4-(phosphooxy)-L-threonine + NAD(+) = 3-amino-2-oxopropyl phosphate + CO2 + NADH. It functions in the pathway cofactor biosynthesis; pyridoxine 5'-phosphate biosynthesis; pyridoxine 5'-phosphate from D-erythrose 4-phosphate: step 4/5. Functionally, catalyzes the NAD(P)-dependent oxidation of 4-(phosphooxy)-L-threonine (HTP) into 2-amino-3-oxo-4-(phosphooxy)butyric acid which spontaneously decarboxylates to form 3-amino-2-oxopropyl phosphate (AHAP). The polypeptide is 4-hydroxythreonine-4-phosphate dehydrogenase (Helicobacter pylori (strain J99 / ATCC 700824) (Campylobacter pylori J99)).